Here is a 173-residue protein sequence, read N- to C-terminus: DNA-directed RNA polymerase subunit delta (173 aa).

An HTH HARE-type domain is found at 14–81 (MALVEIAHEL…SDQTWGLRSW (68 aa)). Positions 110-173 (LDLDEFEEID…DYDDEEEEIK (64 aa)) are disordered.

This sequence belongs to the RpoE family. In terms of assembly, RNAP is composed of a core of 2 alpha, a beta and a beta' subunit. The core is associated with a delta subunit, and at least one of epsilon or omega. When a sigma factor is associated with the core the holoenzyme is formed, which can initiate transcription.

Participates in both the initiation and recycling phases of transcription. In the presence of the delta subunit, RNAP displays an increased specificity of transcription, a decreased affinity for nucleic acids, and an increased efficiency of RNA synthesis because of enhanced recycling. May function in sigma factor switching. It displaces RNA bound to RNA polymerase in a binary complex. The polypeptide is DNA-directed RNA polymerase subunit delta (Bacillus subtilis (strain 168)).